Here is a 570-residue protein sequence, read N- to C-terminus: Periplasmic trehalase (570 aa).

Positions Met-1 to Ala-34 are cleaved as a signal peptide. Residues Arg-159, Trp-166–Asp-167, Asn-203, His-212–Gln-214, Arg-284–Glu-286, and Gly-317 contribute to the substrate site. Active-site proton donor/acceptor residues include Asp-319 and Glu-503. Glu-518 lines the substrate pocket. Residues Lys-544 to Gln-570 are disordered. The span at Pro-554–Gln-570 shows a compositional bias: low complexity.

Belongs to the glycosyl hydrolase 37 family. Monomer.

Its subcellular location is the periplasm. The catalysed reaction is alpha,alpha-trehalose + H2O = alpha-D-glucose + beta-D-glucose. Provides the cells with the ability to utilize trehalose at high osmolarity by splitting it into glucose molecules that can subsequently be taken up by the phosphotransferase-mediated uptake system. This chain is Periplasmic trehalase, found in Salmonella paratyphi C (strain RKS4594).